Here is a 402-residue protein sequence, read N- to C-terminus: Queuine tRNA-ribosyltransferase-like protein (402 aa).

The protein belongs to the queuine tRNA-ribosyltransferase family.

The sequence is that of Queuine tRNA-ribosyltransferase-like protein from Theileria annulata.